The primary structure comprises 404 residues: Serine palmitoyltransferase (404 aa).

Pyridoxal 5'-phosphate is bound by residues 112–113 (GY), serine 185, histidine 213, and threonine 241. N6-(pyridoxal phosphate)lysine is present on lysine 244.

Belongs to the class-II pyridoxal-phosphate-dependent aminotransferase family. Pyridoxal 5'-phosphate serves as cofactor.

It is found in the cytoplasm. The catalysed reaction is L-serine + hexadecanoyl-CoA + H(+) = 3-oxosphinganine + CO2 + CoA. The protein operates within lipid metabolism; sphingolipid metabolism. Functionally, involved in de novo bacterial ceramide synthesis. Catalyzes the condensation of L-serine with palmitoyl-CoA (hexadecanoyl-CoA) to produce 3-oxosphinganine. Can also condense serine and C16:1-CoA, but shows a preference for palmitoyl-CoA. In Caulobacter vibrioides (strain NA1000 / CB15N) (Caulobacter crescentus), this protein is Serine palmitoyltransferase.